Reading from the N-terminus, the 1180-residue chain is Integrin alpha-1 (1180 aa).

An N-terminal signal peptide occupies residues Met-1–Ser-28. Topologically, residues Phe-29–Pro-1142 are extracellular. The FG-GAP 1 repeat unit spans residues Asn-30–Pro-91. Residues Cys-82 and Cys-92 are joined by a disulfide bond. Asn-100, Asn-105, Asn-112, Asn-217, Asn-317, Asn-341, Asn-402, Asn-418, and Asn-459 each carry an N-linked (GlcNAc...) asparagine glycan. Residues Thr-101–Ser-160 form an FG-GAP 2 repeat. Residues Ile-175–Ala-364 form the VWFA domain. Residues Thr-365–His-417 form an FG-GAP 3 repeat. FG-GAP repeat units lie at residues Gln-422–Ile-474, Asn-475–Tyr-537, Ser-556–Glu-614, and Gln-618–Asn-678. Positions 497, 499, 501, and 505 each coordinate Ca(2+). N-linked (GlcNAc...) asparagine glycosylation occurs at Asn-531. Positions 579, 581, 583, 587, 641, 643, 645, and 649 each coordinate Ca(2+). An intrachain disulfide couples Cys-687 to Cys-696. 3 N-linked (GlcNAc...) asparagine glycosylation sites follow: Asn-698, Asn-747, and Asn-779. A disulfide bridge links Cys-702 with Cys-755. The cysteines at positions 807 and 813 are disulfide-linked. 8 N-linked (GlcNAc...) asparagine glycosylation sites follow: Asn-820, Asn-839, Asn-882, Asn-907, Asn-938, Asn-965, Asn-973, and Asn-1007. A disulfide bridge connects residues Cys-877 and Cys-885. 2 cysteine pairs are disulfide-bonded: Cys-1029–Cys-1062 and Cys-1066–Cys-1073. Residues Asn-1084, Asn-1103, and Asn-1114 are each glycosylated (N-linked (GlcNAc...) asparagine). Residues Leu-1143–Trp-1165 traverse the membrane as a helical segment. Topologically, residues Lys-1166–Lys-1180 are cytoplasmic. The GFFKR motif motif lies at Gly-1168–Arg-1172.

It belongs to the integrin alpha chain family. As to quaternary structure, heterodimer of an alpha and a beta subunit. Alpha-1 associates with beta-1. Interacts with RAB21. Interacts (via cytoplasmic domain) with PTPN2; activates PTPN2 phosphatase activity towards EGFR and negatively regulates EGF signaling.

It is found in the membrane. Its function is as follows. Integrin alpha-1/beta-1 is a receptor for laminin and collagen. It recognizes the proline-hydroxylated sequence G-F-P-G-E-R in collagen. Involved in anchorage-dependent, negative regulation of EGF-stimulated cell growth. The polypeptide is Integrin alpha-1 (Itga1) (Rattus norvegicus (Rat)).